The following is a 252-amino-acid chain: Indole-3-glycerol phosphate synthase (252 aa).

The protein belongs to the TrpC family.

It catalyses the reaction 1-(2-carboxyphenylamino)-1-deoxy-D-ribulose 5-phosphate + H(+) = (1S,2R)-1-C-(indol-3-yl)glycerol 3-phosphate + CO2 + H2O. It functions in the pathway amino-acid biosynthesis; L-tryptophan biosynthesis; L-tryptophan from chorismate: step 4/5. This is Indole-3-glycerol phosphate synthase from Bacillus licheniformis (strain ATCC 14580 / DSM 13 / JCM 2505 / CCUG 7422 / NBRC 12200 / NCIMB 9375 / NCTC 10341 / NRRL NRS-1264 / Gibson 46).